The chain runs to 376 residues: Palmitoyl-[acyl-carrier-protein] 4-desaturase 2, chloroplastic (376 aa).

The N-terminal 33 residues, 1–33 (MELHLALRASPLPAADPGRRPPPPRGNFATNCT), are a transit peptide targeting the chloroplast. Glu114, Glu149, His152, Glu202, Glu235, and His238 together coordinate Fe cation.

This sequence belongs to the fatty acid desaturase type 2 family. Homodimer. It depends on Fe(2+) as a cofactor. In terms of tissue distribution, preferentially expressed in the flower labellum.

The protein localises to the plastid. Its subcellular location is the chloroplast stroma. The enzyme catalyses hexadecanoyl-[ACP] + 2 reduced [2Fe-2S]-[ferredoxin] + O2 + 2 H(+) = (4Z)-hexadecenoyl-[ACP] + 2 oxidized [2Fe-2S]-[ferredoxin] + 2 H2O. The catalysed reaction is octadecanoyl-[ACP] + 2 reduced [2Fe-2S]-[ferredoxin] + O2 + 2 H(+) = (9Z)-octadecenoyl-[ACP] + 2 oxidized [2Fe-2S]-[ferredoxin] + 2 H2O. The protein operates within lipid metabolism; fatty acid metabolism. Converts stearoyl-ACP to oleoyl-ACP by introduction of a cis double bond between carbons 9 and 10 of the acyl chain. Converts palmitoyl-ACP to (4Z)-hexadec-4-enoyl-ACP by introduction of a cis double bond between carbons 4 and 5 of the acyl chain. Catalyzes the desaturation of saturated fatty acid 18:0 and 16:0 to generate 18:1 (delta-9) and 16:1 (delta-4) intermediates, expected to give rise to 9-alkenes and 12-alkenes, respectively. In Ophrys arachnitiformis subsp. archipelagi (Orchid), this protein is Palmitoyl-[acyl-carrier-protein] 4-desaturase 2, chloroplastic (SAD2).